The following is a 70-amino-acid chain: Small ribosomal subunit protein bS21 (70 aa).

The protein belongs to the bacterial ribosomal protein bS21 family.

The protein is Small ribosomal subunit protein bS21 of Delftia acidovorans (strain DSM 14801 / SPH-1).